A 219-amino-acid polypeptide reads, in one-letter code: Orotate phosphoribosyltransferase (219 aa).

Lysine 26 is a binding site for 5-phospho-alpha-D-ribose 1-diphosphate. Residue 34–35 coordinates orotate; that stretch reads FF. Residues 72-73, arginine 98, lysine 99, lysine 102, histidine 104, and 124-132 each bind 5-phospho-alpha-D-ribose 1-diphosphate; these read YK and DDVITAGTA. Orotate is bound by residues threonine 128 and arginine 156.

The protein belongs to the purine/pyrimidine phosphoribosyltransferase family. PyrE subfamily. Homodimer. The cofactor is Mg(2+).

The enzyme catalyses orotidine 5'-phosphate + diphosphate = orotate + 5-phospho-alpha-D-ribose 1-diphosphate. The protein operates within pyrimidine metabolism; UMP biosynthesis via de novo pathway; UMP from orotate: step 1/2. Functionally, catalyzes the transfer of a ribosyl phosphate group from 5-phosphoribose 1-diphosphate to orotate, leading to the formation of orotidine monophosphate (OMP). This is Orotate phosphoribosyltransferase from Xylella fastidiosa (strain M23).